The following is a 95-amino-acid chain: Aspartyl/glutamyl-tRNA(Asn/Gln) amidotransferase subunit C (95 aa).

This sequence belongs to the GatC family. Heterotrimer of A, B and C subunits.

The catalysed reaction is L-glutamyl-tRNA(Gln) + L-glutamine + ATP + H2O = L-glutaminyl-tRNA(Gln) + L-glutamate + ADP + phosphate + H(+). It carries out the reaction L-aspartyl-tRNA(Asn) + L-glutamine + ATP + H2O = L-asparaginyl-tRNA(Asn) + L-glutamate + ADP + phosphate + 2 H(+). Functionally, allows the formation of correctly charged Asn-tRNA(Asn) or Gln-tRNA(Gln) through the transamidation of misacylated Asp-tRNA(Asn) or Glu-tRNA(Gln) in organisms which lack either or both of asparaginyl-tRNA or glutaminyl-tRNA synthetases. The reaction takes place in the presence of glutamine and ATP through an activated phospho-Asp-tRNA(Asn) or phospho-Glu-tRNA(Gln). This Hydrogenovibrio crunogenus (strain DSM 25203 / XCL-2) (Thiomicrospira crunogena) protein is Aspartyl/glutamyl-tRNA(Asn/Gln) amidotransferase subunit C.